Reading from the N-terminus, the 955-residue chain is Centrosomal protein of 112 kDa (955 aa).

A coiled-coil region spans residues 277–954 (QKHDADVQKI…QEELTTYQGR (678 aa)).

The protein localises to the cytoplasm. It is found in the cytoskeleton. It localises to the microtubule organizing center. Its subcellular location is the centrosome. The polypeptide is Centrosomal protein of 112 kDa (CEP112) (Homo sapiens (Human)).